A 155-amino-acid polypeptide reads, in one-letter code: SsrA-binding protein (155 aa).

Belongs to the SmpB family.

The protein localises to the cytoplasm. Required for rescue of stalled ribosomes mediated by trans-translation. Binds to transfer-messenger RNA (tmRNA), required for stable association of tmRNA with ribosomes. tmRNA and SmpB together mimic tRNA shape, replacing the anticodon stem-loop with SmpB. tmRNA is encoded by the ssrA gene; the 2 termini fold to resemble tRNA(Ala) and it encodes a 'tag peptide', a short internal open reading frame. During trans-translation Ala-aminoacylated tmRNA acts like a tRNA, entering the A-site of stalled ribosomes, displacing the stalled mRNA. The ribosome then switches to translate the ORF on the tmRNA; the nascent peptide is terminated with the 'tag peptide' encoded by the tmRNA and targeted for degradation. The ribosome is freed to recommence translation, which seems to be the essential function of trans-translation. In Clostridium acetobutylicum (strain ATCC 824 / DSM 792 / JCM 1419 / IAM 19013 / LMG 5710 / NBRC 13948 / NRRL B-527 / VKM B-1787 / 2291 / W), this protein is SsrA-binding protein.